A 745-amino-acid polypeptide reads, in one-letter code: MQRDYLIRVETESMSDFKRLNGLMIGFVIKGEAHIYDENNMTQCNSGDIFIINHRDLYRFQLQQDGIICYIQFQMKYLADKFDDAHCLYFHLTDATTTKNKHQLRNIMARLVSTHIRHNELSKLTEQQLVIQLLMHMIHYVPRTYHSNQSILNDDKVNQVCDYIELHFHEDLSLSELSEYVGWSESHLSKKFAESLGVGFQHFLNTTRIEHAKLDLTYTDEMITDIALQNGFSSAASFARTFKHITHQTPKQYRGDRPAVTENQQSAQHDYHDRELILLLNDYIEEMNHFIEDIEMMNYKEITFQPTNQQLNQFNHIIQVGYLRNLLNTQYQSQLLTCHHDFQVNEVLAYDVMPYIMKKLNAPFTYDAEISNIFYDIDLCLDFLLDHNFSLTMHLDQYDSRDYIDAFKVFIHHVALHVSHRKDLKFNLYVTTLHTSLIEMIDYFKALFPNGGLYIHLDQATERQLPLLKRLEPHIDHFVFDANSNNAVDFNKMNDDEFKTASQMIINKTNYLIDLMHRHHLKRPLILLNWNTLTGDTFITNGECFRGGIIIEQLLKLSSKVEGIGYWLNYDLHVSHCRNERDYMNSIELFHQYNGKRPVYFTALLFNKLTSNILYSDDTCIVTGTDSNFQILLYDAKHFNPYLALDNQMNMRATEMIHLNINALEEGMYKIKHFTLDKENGALFNLWRKHHTIHGMDKDSIDYVNRMSFPKLEVYDIDMTDTLALNIKMITNGIHLIEVKRYPSS.

Positions 158-256 (NQVCDYIELH…HQTPKQYRGD (99 aa)) constitute an HTH araC/xylS-type domain. 2 consecutive DNA-binding regions (H-T-H motif) follow at residues 175 to 196 (SELS…AESL) and 223 to 246 (ITDI…KHIT).

This is an uncharacterized protein from Staphylococcus aureus.